We begin with the raw amino-acid sequence, 411 residues long: MNALAATSRNFKQAAKLLGLDSKLEKSLLIPFREIKVECTIPKDDGTLASYVGFRVQHDNARGPMKGGIRYHHEVDPDEVNALAQLMTWKTAVANIPYGGAKGGIGCSPGDLSISELERLTRVFTQKIHDLIGIHTDVPAPDMGTNSQTMAWILDEYSKFHGYSPAVVTGKPVDLGGSLGRDAATGRGVLFATEALLAEHGKGIAGQRFVIQGFGNVGSWAAQLISEAGGKVIAISDVTGAVKNVDGLDIAQLVKHSAENKGIKGFKGGDAIAPDSLLTEECDVLIPAALGGVINKDNANDIKAKYIIEAANHPTDPEADEILSKKGVLILPDILANSGGVTVSYFEWVQNIQGFMWDEEKVNAELRTYITRAFGNVKQMCRSHSCDLRMGAFTLGVNRVARATVLRGWEA.

The active site involves K102.

This sequence belongs to the Glu/Leu/Phe/Val dehydrogenases family.

The catalysed reaction is L-glutamate + NAD(+) + H2O = 2-oxoglutarate + NH4(+) + NADH + H(+). It catalyses the reaction L-glutamate + NADP(+) + H2O = 2-oxoglutarate + NH4(+) + NADPH + H(+). The sequence is that of Glutamate dehydrogenase (GDH1) from Zea mays (Maize).